The sequence spans 419 residues: Gamma-glutamyl phosphate reductase (419 aa).

Belongs to the gamma-glutamyl phosphate reductase family.

It is found in the cytoplasm. The catalysed reaction is L-glutamate 5-semialdehyde + phosphate + NADP(+) = L-glutamyl 5-phosphate + NADPH + H(+). It participates in amino-acid biosynthesis; L-proline biosynthesis; L-glutamate 5-semialdehyde from L-glutamate: step 2/2. Its function is as follows. Catalyzes the NADPH-dependent reduction of L-glutamate 5-phosphate into L-glutamate 5-semialdehyde and phosphate. The product spontaneously undergoes cyclization to form 1-pyrroline-5-carboxylate. This is Gamma-glutamyl phosphate reductase from Bordetella avium (strain 197N).